A 155-amino-acid polypeptide reads, in one-letter code: Photosystem II extrinsic protein V (155 aa).

An N-terminal signal peptide occupies residues 1–20 (MFVKMIGWLVLFLFAHQTWA). Cysteine 50, cysteine 53, histidine 54, and histidine 105 together coordinate heme c.

This sequence belongs to the cytochrome c family. PsbV subfamily. In terms of assembly, PSII is composed of 1 copy each of membrane proteins PsbA, PsbB, PsbC, PsbD, PsbE, PsbF, PsbH, PsbI, PsbJ, PsbK, PsbL, PsbM, PsbT, PsbY, PsbZ, Psb30/Ycf12, at least 3 peripheral proteins of the oxygen-evolving complex and a large number of cofactors. It forms dimeric complexes. The extrinsic subunits in red algae are PsbO (OEC33), PsbQ', cytochrome c-550 and PsbU. Requires heme c as cofactor.

It localises to the plastid. The protein localises to the chloroplast thylakoid membrane. In terms of biological role, one of the extrinsic, lumenal subunits of photosystem II (PSII). PSII is a light-driven water plastoquinone oxidoreductase, using light energy to abstract electrons from H(2)O, generating a proton gradient subsequently used for ATP formation. The extrinsic proteins stabilize the structure of photosystem II oxygen-evolving complex (OEC), the ion environment of oxygen evolution and protect the OEC against heat-induced inactivation. Unlike the T.vulcanus ortholog, it does not bind by itself to PSII, but requires all extrinsic members of the OEC. This chain is Photosystem II extrinsic protein V, found in Cyanidium caldarium (Red alga).